A 329-amino-acid chain; its full sequence is GTP 3',8-cyclase (329 aa).

In terms of domain architecture, Radical SAM core spans 8 to 234 (AFARKFYYLR…QLRQRSDGPA (227 aa)). Arginine 17 contacts GTP. Residues cysteine 24 and cysteine 28 each coordinate [4Fe-4S] cluster. Tyrosine 30 is a binding site for S-adenosyl-L-methionine. Residue cysteine 31 coordinates [4Fe-4S] cluster. Arginine 68 is a binding site for GTP. Residue glycine 72 participates in S-adenosyl-L-methionine binding. GTP is bound at residue threonine 99. Residue serine 123 coordinates S-adenosyl-L-methionine. Lysine 160 contributes to the GTP binding site. An S-adenosyl-L-methionine-binding site is contributed by methionine 194. Positions 257 and 260 each coordinate [4Fe-4S] cluster. 262–264 (RLR) provides a ligand contact to GTP. Cysteine 274 is a [4Fe-4S] cluster binding site.

This sequence belongs to the radical SAM superfamily. MoaA family. As to quaternary structure, monomer and homodimer. It depends on [4Fe-4S] cluster as a cofactor.

The enzyme catalyses GTP + AH2 + S-adenosyl-L-methionine = (8S)-3',8-cyclo-7,8-dihydroguanosine 5'-triphosphate + 5'-deoxyadenosine + L-methionine + A + H(+). It functions in the pathway cofactor biosynthesis; molybdopterin biosynthesis. In terms of biological role, catalyzes the cyclization of GTP to (8S)-3',8-cyclo-7,8-dihydroguanosine 5'-triphosphate. The protein is GTP 3',8-cyclase of Escherichia coli (strain K12 / MC4100 / BW2952).